Consider the following 631-residue polypeptide: tRNA uridine 5-carboxymethylaminomethyl modification enzyme MnmG (631 aa).

Residues 15 to 20 (GGGHAG), Val127, and Ser182 contribute to the FAD site. Residue 275–289 (GPRYCPSIEDKIVRF) participates in NAD(+) binding. Gln372 contacts FAD.

Belongs to the MnmG family. In terms of assembly, homodimer. Heterotetramer of two MnmE and two MnmG subunits. FAD is required as a cofactor.

The protein localises to the cytoplasm. Functionally, NAD-binding protein involved in the addition of a carboxymethylaminomethyl (cmnm) group at the wobble position (U34) of certain tRNAs, forming tRNA-cmnm(5)s(2)U34. The sequence is that of tRNA uridine 5-carboxymethylaminomethyl modification enzyme MnmG from Buchnera aphidicola subsp. Schizaphis graminum (strain Sg).